We begin with the raw amino-acid sequence, 336 residues long: Toluate 1,2-dioxygenase electron transfer component (336 aa).

The 2Fe-2S ferredoxin-type domain occupies 3-97 (HKVATDFEDG…DCVIRVPAAS (95 aa)). [2Fe-2S] cluster contacts are provided by C40, C45, C48, and C81. A ferredoxin-reductase region spans residues 99–336 (VCKTQQAGYQ…FYYEKFAASA (238 aa)). Positions 104-204 (QAGYQAAISN…AGPLGAFYLR (101 aa)) constitute an FAD-binding FR-type domain.

It belongs to the bacterial ring-hydroxylating dioxygenase ferredoxin reductase family. In terms of assembly, this dioxygenase system consists of three proteins: the two subunits of the hydroxylase component (XylX and XylY), and an electron transfer component (XylZ). It depends on FAD as a cofactor. The cofactor is [2Fe-2S] cluster.

It catalyses the reaction 2 reduced [2Fe-2S]-[ferredoxin] + NAD(+) + H(+) = 2 oxidized [2Fe-2S]-[ferredoxin] + NADH. Functionally, electron transfer component of toluate 1,2-dioxygenase system. This Pseudomonas putida (Arthrobacter siderocapsulatus) protein is Toluate 1,2-dioxygenase electron transfer component (xylZ).